We begin with the raw amino-acid sequence, 143 residues long: Actin-depolymerizing factor 5 (143 aa).

An ADF-H domain is found at 11–143; that stretch reads GMNVKEECQR…GYDVIRGRAQ (133 aa).

Belongs to the actin-binding proteins ADF family.

In terms of biological role, actin-depolymerizing protein. Severs actin filaments (F-actin) and binds to actin monomers. This chain is Actin-depolymerizing factor 5 (ADF5), found in Oryza sativa subsp. japonica (Rice).